We begin with the raw amino-acid sequence, 469 residues long: Probable ribonuclease FAU-1 (469 aa).

Belongs to the FAU-1 family.

Its function is as follows. Probable RNase involved in rRNA stability through maturation and/or degradation of precursor rRNAs. Binds to RNA in loop regions with AU-rich sequences. In Pyrococcus abyssi (strain GE5 / Orsay), this protein is Probable ribonuclease FAU-1.